The primary structure comprises 345 residues: Beta-2-glycoprotein 1 (345 aa).

A signal peptide spans 1–19 (MPPPALVLLLGFLCHVAIA). 4 Sushi domains span residues 21–81 (RTCP…KCMP), 82–139 (RVCP…VCAP), 140–202 (ITCP…ECRE), and 203–262 (VRCP…SCKA). 11 disulfide bridges follow: Cys-23/Cys-66, Cys-51/Cys-79, Cys-84/Cys-124, Cys-110/Cys-137, Cys-142/Cys-188, Cys-174/Cys-200, Cys-205/Cys-248, Cys-234/Cys-260, Cys-264/Cys-315, Cys-300/Cys-325, and Cys-307/Cys-345. The O-linked (GalNAc...) threonine glycan is linked to Thr-33. Asn-92 is a glycosylation site (N-linked (GlcNAc...) asparagine). Residues Asn-162, Asn-183, and Asn-193 are each glycosylated (N-linked (GlcNAc...) asparagine). A glycan (N-linked (GlcNAc...) asparagine) is linked at Asn-253. Residues 263-345 (SCKLSIKRAT…KTDASDVKPC (83 aa)) form a sushi-like region.

In terms of tissue distribution, expressed by the liver and secreted in plasma.

It localises to the secreted. Binds to various kinds of negatively charged substances such as heparin, phospholipids, and dextran sulfate. May prevent activation of the intrinsic blood coagulation cascade by binding to phospholipids on the surface of damaged cells. This Bos taurus (Bovine) protein is Beta-2-glycoprotein 1 (APOH).